The primary structure comprises 83 residues: Short neurotoxin C (83 aa).

Positions 1–21 (MKTLLLTLVVVTMVCLDLAYT) are cleaved as a signal peptide. Intrachain disulfides connect C24–C45, C38–C62, C64–C75, and C76–C81.

The protein belongs to the three-finger toxin family. Short-chain subfamily. Type I alpha-neurotoxin sub-subfamily. In terms of tissue distribution, expressed by the venom gland.

Its subcellular location is the secreted. In terms of biological role, binds to muscle nicotinic acetylcholine receptor (nAChR) and inhibit acetylcholine from binding to the receptor, thereby impairing neuromuscular transmission. This is Short neurotoxin C from Laticauda colubrina (Yellow-lipped sea krait).